Here is a 148-residue protein sequence, read N- to C-terminus: WAP four-disulfide core domain protein 12 (148 aa).

A signal peptide spans 1-23; the sequence is MRSYSFWFLTAFLVFATLALGEA. The WAP domain occupies 27-74; the sequence is GKEKWGNCPAEKGSCIKSGPSQCHADNDCPGDKKCCFLSCSFKCVSPD. 4 disulfide bridges follow: Cys-34–Cys-62, Cys-41–Cys-66, Cys-49–Cys-61, and Cys-55–Cys-70. The disordered stretch occupies residues 74–148; it reads DRIRKEGGNE…QEASPQKEWS (75 aa).

It is found in the secreted. In terms of biological role, antibacterial protein. Putative acid-stable proteinase inhibitor. The chain is WAP four-disulfide core domain protein 12 (WFDC12) from Lemur catta (Ring-tailed lemur).